The following is a 592-amino-acid chain: Leucine-rich repeat and immunoglobulin-like domain-containing nogo receptor-interacting protein 3 (592 aa).

Positions 1–24 are cleaved as a signal peptide; sequence MTCWLCVLSLPLLLLPAAPPPAGG. The LRRNT domain occupies 25-54; it reads CPARCECTVQTRAVACTRRRLTAVPDGIPA. The Extracellular portion of the chain corresponds to 25–531; it reads CPARCECTVQ…LDLTTILVST (507 aa). 11 LRR repeats span residues 55-76, 79-100, 103-124, 127-148, 151-172, 175-196, 207-228, 247-268, 271-292, 295-316, and 319-340; these read ETRL…DLAA, ALEE…AFAN, RLRV…VFTR, NLTL…TFQD, SLRR…AFAG, ALEE…SLGH, HLAI…LHLE, NLTS…ALRH, HLTC…SFRD, RLRE…AFLG, and QIRL…TFHS. N-linked (GlcNAc...) asparagine glycosylation occurs at Asn-127. Asn-185 carries an N-linked (GlcNAc...) asparagine glycan. N-linked (GlcNAc...) asparagine glycosylation is found at Asn-247, Asn-257, and Asn-276. N-linked (GlcNAc...) asparagine glycosylation is present at Asn-324. The LRRCT domain occupies 352-406; sequence NPLACDCRLLWIVQRRKTLNFDGRLPACATPAEVRGDALRNLPDSVLFEYFVCRK. Residues 407-496 form the Ig-like C2-type domain; that stretch reads PKIRERRLQR…GNDTYFATLT (90 aa). A disulfide bond links Cys-429 and Cys-480. Residues Asn-488 and Asn-512 are each glycosylated (N-linked (GlcNAc...) asparagine). The chain crosses the membrane as a helical span at residues 532-552; that stretch reads AMGCITFLGVVLFCFVLLFVW. Topologically, residues 553-592 are cytoplasmic; the sequence is SRGRGQHKNNFSVEYSFRKVDGPAAAAGQGGARKFNMKMI.

It localises to the membrane. In Homo sapiens (Human), this protein is Leucine-rich repeat and immunoglobulin-like domain-containing nogo receptor-interacting protein 3 (LINGO3).